The sequence spans 97 residues: Protein SENESCENCE-ASSOCIATED GENE 21, mitochondrial (97 aa).

The N-terminal 46 residues, 1 to 46 (MARSISNVKIVSAFVSRELSNAIFRRGYAATAAQGSVSSGGRSGAV), are a transit peptide targeting the mitochondrion.

Belongs to the LEA type 3 family. In terms of tissue distribution, expressed in roots, stems leaves and flowers, but not in seeds. In short days, observed in cotyledons and roots but absent from rosette leaves.

It is found in the mitochondrion. Its function is as follows. Mediates tolerance to oxidative stresses (e.g. hydrogen peroxide H(2)O(2), diamide, menadione and tert-butyl hydroperoxide) by minimizing the negative effects of oxidation and monitoring photosynthesis during stress. Promotes root development. Prevents premature aging (e.g. senescence and flowering). Involved in resistance against compatible pathogens such as Botrytis cinerea and Pseudomonas syringae pv. tomato. This chain is Protein SENESCENCE-ASSOCIATED GENE 21, mitochondrial, found in Arabidopsis thaliana (Mouse-ear cress).